Reading from the N-terminus, the 333-residue chain is Eukaryotic translation initiation factor 3 subunit I (333 aa).

WD repeat units lie at residues 8 to 47, 50 to 91, 144 to 183, and 186 to 225; these read GHER…RLGT, GHTG…ALLK, CNDS…VLVN, and EHSR…HQKT. Thr-219 bears the Phosphothreonine mark. Residue Lys-264 is modified to N6-acetyllysine. Residue Lys-282 forms a Glycyl lysine isopeptide (Lys-Gly) (interchain with G-Cter in ubiquitin) linkage. A WD 5 repeat occupies 283–324; the sequence is GHFGPINSVAFHPDGKSYSSGGEDGYVRIHYFDPQYFEFEFE. Tyr-308 carries the post-translational modification Phosphotyrosine.

Belongs to the eIF-3 subunit I family. As to quaternary structure, component of the eukaryotic translation initiation factor 3 (eIF-3) complex, which is composed of 13 subunits: EIF3A, EIF3B, EIF3C, EIF3D, EIF3E, EIF3F, EIF3G, EIF3H, EIF3I, EIF3J, EIF3K, EIF3L and EIF3M. The eIF-3 complex appears to include 3 stable modules: module A is composed of EIF3A, EIF3B, EIF3G and EIF3I; module B is composed of EIF3F, EIF3H, and EIF3M; and module C is composed of EIF3C, EIF3D, EIF3E, EIF3K and EIF3L. EIF3C of module C binds EIF3B of module A and EIF3H of module B, thereby linking the three modules. EIF3J is a labile subunit that binds to the eIF-3 complex via EIF3B. The eIF-3 complex interacts with RPS6KB1 under conditions of nutrient depletion. Mitogenic stimulation leads to binding and activation of a complex composed of MTOR and RPTOR, leading to phosphorylation and release of RPS6KB1 and binding of EIF4B to eIF-3. In terms of processing, phosphorylated by TGF-beta type II receptor.

Its subcellular location is the cytoplasm. Component of the eukaryotic translation initiation factor 3 (eIF-3) complex, which is required for several steps in the initiation of protein synthesis. The eIF-3 complex associates with the 40S ribosome and facilitates the recruitment of eIF-1, eIF-1A, eIF-2:GTP:methionyl-tRNAi and eIF-5 to form the 43S pre-initiation complex (43S PIC). The eIF-3 complex stimulates mRNA recruitment to the 43S PIC and scanning of the mRNA for AUG recognition. The eIF-3 complex is also required for disassembly and recycling of post-termination ribosomal complexes and subsequently prevents premature joining of the 40S and 60S ribosomal subunits prior to initiation. The eIF-3 complex specifically targets and initiates translation of a subset of mRNAs involved in cell proliferation, including cell cycling, differentiation and apoptosis, and uses different modes of RNA stem-loop binding to exert either translational activation or repression. The polypeptide is Eukaryotic translation initiation factor 3 subunit I (Oryctolagus cuniculus (Rabbit)).